The following is a 661-amino-acid chain: 7-beta-hydroxy-3-oxochol-24-oyl-CoA 4-desaturase (661 aa).

Residue Gln104 participates in FMN binding. 168–171 (HCAH) lines the substrate pocket. Residue Tyr173 is the Proton donor of the active site. Residues Arg222, Lys298, and 320-321 (GR) each bind FMN. [4Fe-4S] cluster is bound by residues Cys344, Cys347, Cys351, and Cys363. Residues Gly394, Glu413, Gln421, Lys431, and Ala458 each contribute to the FAD site.

In the N-terminal section; belongs to the NADH:flavin oxidoreductase/NADH oxidase family. As to quaternary structure, homotrimer. The cofactor is FMN. It depends on FAD as a cofactor. [4Fe-4S] cluster serves as cofactor.

It catalyses the reaction 7beta-hydroxy-3-oxochol-24-oyl-CoA + NAD(+) = 7beta-hydroxy-3-oxochol-4-en-24-oyl-CoA + NADH + H(+). It participates in lipid metabolism; bile acid degradation. Activity is inhibited by sulfhydryl-reactive compounds, acriflavine, o-phenanthroline and EDTA. In terms of biological role, NADH-dependent flavin oxidoreductase. Stereo-specific NAD(H)-dependent 3-oxo-delta4-cholenoic acid oxidoreductase involved in bile acid 7beta-dehydroxylation. The protein is 7-beta-hydroxy-3-oxochol-24-oyl-CoA 4-desaturase of Clostridium scindens (strain JCM 10418 / VPI 12708).